The primary structure comprises 120 residues: Large ribosomal subunit protein eL34 (120 aa).

Belongs to the eukaryotic ribosomal protein eL34 family.

The polypeptide is Large ribosomal subunit protein eL34 (RPL34) (Pisum sativum (Garden pea)).